Here is a 399-residue protein sequence, read N- to C-terminus: Cell division protein FtsZ (399 aa).

Residues 30–34 (GGGSN), 117–119 (GTG), Glu-148, Lys-152, and Asp-196 contribute to the GTP site. The disordered stretch occupies residues 349-368 (TLMSGNQNAPSGSYEQQDSS). The span at 351-368 (MSGNQNAPSGSYEQQDSS) shows a compositional bias: polar residues.

It belongs to the FtsZ family. Homodimer. Polymerizes to form a dynamic ring structure in a strictly GTP-dependent manner. Interacts directly with several other division proteins.

Its subcellular location is the cytoplasm. Its function is as follows. Essential cell division protein that forms a contractile ring structure (Z ring) at the future cell division site. The regulation of the ring assembly controls the timing and the location of cell division. One of the functions of the FtsZ ring is to recruit other cell division proteins to the septum to produce a new cell wall between the dividing cells. Binds GTP and shows GTPase activity. The sequence is that of Cell division protein FtsZ from Borreliella burgdorferi (strain ATCC 35210 / DSM 4680 / CIP 102532 / B31) (Borrelia burgdorferi).